A 383-amino-acid chain; its full sequence is S-adenosylmethionine synthase (383 aa).

Position 22 (His22) interacts with ATP. Mg(2+) is bound at residue Asp24. Glu50 is a binding site for K(+). Residues Glu63 and Gln99 each coordinate L-methionine. The interval 99–109 is flexible loop; that stretch reads QSSEINQAVQS. ATP contacts are provided by residues 160 to 162, Asp235, 241 to 242, Ser258, and Lys262; these read DMK and RK. Asp235 contacts L-methionine. Lys266 contributes to the L-methionine binding site.

The protein belongs to the AdoMet synthase family. In terms of assembly, homotetramer; dimer of dimers. Mg(2+) is required as a cofactor. It depends on K(+) as a cofactor.

It localises to the cytoplasm. It catalyses the reaction L-methionine + ATP + H2O = S-adenosyl-L-methionine + phosphate + diphosphate. It functions in the pathway amino-acid biosynthesis; S-adenosyl-L-methionine biosynthesis; S-adenosyl-L-methionine from L-methionine: step 1/1. Functionally, catalyzes the formation of S-adenosylmethionine (AdoMet) from methionine and ATP. The overall synthetic reaction is composed of two sequential steps, AdoMet formation and the subsequent tripolyphosphate hydrolysis which occurs prior to release of AdoMet from the enzyme. The protein is S-adenosylmethionine synthase of Mycoplasma pneumoniae (strain ATCC 29342 / M129 / Subtype 1) (Mycoplasmoides pneumoniae).